Here is a 254-residue protein sequence, read N- to C-terminus: Phosphoribosylaminoimidazole-succinocarboxamide synthase (254 aa).

The protein belongs to the SAICAR synthetase family.

The catalysed reaction is 5-amino-1-(5-phospho-D-ribosyl)imidazole-4-carboxylate + L-aspartate + ATP = (2S)-2-[5-amino-1-(5-phospho-beta-D-ribosyl)imidazole-4-carboxamido]succinate + ADP + phosphate + 2 H(+). It participates in purine metabolism; IMP biosynthesis via de novo pathway; 5-amino-1-(5-phospho-D-ribosyl)imidazole-4-carboxamide from 5-amino-1-(5-phospho-D-ribosyl)imidazole-4-carboxylate: step 1/2. The sequence is that of Phosphoribosylaminoimidazole-succinocarboxamide synthase from Sinorhizobium fredii (strain NBRC 101917 / NGR234).